The following is a 181-amino-acid chain: Adenylate kinase (181 aa).

G10–T15 is an ATP binding site. The segment at S30–V59 is NMP. AMP-binding positions include T31, R36, D57–V59, G85–R88, and Q92. Positions A126–D132 are LID. Residue R127 coordinates ATP. Residues R129 and R140 each coordinate AMP. Residue G166 participates in ATP binding.

The protein belongs to the adenylate kinase family. Monomer.

The protein resides in the cytoplasm. It carries out the reaction AMP + ATP = 2 ADP. Its pathway is purine metabolism; AMP biosynthesis via salvage pathway; AMP from ADP: step 1/1. Functionally, catalyzes the reversible transfer of the terminal phosphate group between ATP and AMP. Plays an important role in cellular energy homeostasis and in adenine nucleotide metabolism. This chain is Adenylate kinase, found in Mycolicibacterium paratuberculosis (strain ATCC BAA-968 / K-10) (Mycobacterium paratuberculosis).